A 157-amino-acid chain; its full sequence is Endoribonuclease YbeY (157 aa).

Residues His-114, His-118, and His-124 each coordinate Zn(2+).

It belongs to the endoribonuclease YbeY family. The cofactor is Zn(2+).

It is found in the cytoplasm. Its function is as follows. Single strand-specific metallo-endoribonuclease involved in late-stage 70S ribosome quality control and in maturation of the 3' terminus of the 16S rRNA. The protein is Endoribonuclease YbeY of Caulobacter vibrioides (strain ATCC 19089 / CIP 103742 / CB 15) (Caulobacter crescentus).